The chain runs to 203 residues: Outer-membrane lipoprotein carrier protein (203 aa).

The first 21 residues, 1–21 (MKKQLMTSCLFAAVLAAPAFA), serve as a signal peptide directing secretion.

It belongs to the LolA family. As to quaternary structure, monomer.

It is found in the periplasm. Participates in the translocation of lipoproteins from the inner membrane to the outer membrane. Only forms a complex with a lipoprotein if the residue after the N-terminal Cys is not an aspartate (The Asp acts as a targeting signal to indicate that the lipoprotein should stay in the inner membrane). The sequence is that of Outer-membrane lipoprotein carrier protein from Sodalis glossinidius (strain morsitans).